The primary structure comprises 299 residues: uncharacterized protein (299 aa).

Helical transmembrane passes span 13-33 (ILFL…LHFM), 36-56 (AFVI…FLML), 79-99 (SFGI…VIII), 112-132 (TAIG…ISVI), 151-171 (ITSE…LFFI), 201-221 (FLIL…VILV), 241-261 (YVIL…MLLS), and 267-287 (PPGP…FLII).

The protein belongs to the ABC-3 integral membrane protein family.

The protein localises to the plastid. Its subcellular location is the cyanelle membrane. This is an uncharacterized protein from Cyanophora paradoxa.